A 147-amino-acid chain; its full sequence is uncharacterized protein (147 aa).

One can recognise an HTH LytTR-type domain in the interval 44-147; it reads LVGYIDKEIH…LKSIKERLSI (104 aa).

The protein localises to the cytoplasm. This is an uncharacterized protein from Staphylococcus aureus (strain MRSA252).